The following is a 790-amino-acid chain: MIADDDEKWLAAAIAAVKQNAFYMQRAIDSNNLKDALKFSAQMLSELRTSKLSPHKYYELYMRVFNELGTLEIFFKEETGRGCSIAELYELVQHAGNILPRLYLLCTIGSVYIKSKDVTATDILKDLVEMCRAVQHPLRGLFLRSYLAQVTRDKLPSIGSDLEGDGDAHMNALEFVLQNFTEMNKLWVRMQHQGPSREKEKREKERNELRDLVGKNLHVLSQLEGVDLGIYRDTVLPRILEQVVNCKDELAQCYLMDCIIQVFPDDFHLQTLDVLLGACPQLQPSVDIKTVLSGLMERLSNYAASSVEALPNFLQVEAFSKLNYAIGKVVEAQADLPAAASVTLYLFLLKFTLHVYSDRLDYVDQVLGSCVTQLSATGKLCDDKAAKQIVAFLSAPLEKYNNVVTILKLTNYPLVMEYLDRETNKAMAIILVQSVFKNNTHIATADEVDALFELAKGLMKDFDGTIDDEIDEEDFQEEQNLVARLVNKLYIDDPEEMSKIIFTVRKHIVAGGPKRLPLTIPPLVFSALKLIRRLRGGDENPFGDDASATPKRILQLLSETVEVLSDVSAPDLALRLYLQCAQAANNCELETVAYEFFTKAYLLYEEEISDSKAQVTALRLIIGTLQRMRVFNVENRDTLTHKATGYSARLLRKPDQCRAVYECAHLFWADECENLKDGERVVLCLKRAQRIADAVQQMANASRGTSSTGSVSLYVELLNKYLYFLEKGNQQVTGDTIKSLAELIKSETKKVESGAEPFINSTLRYIEFQRQQEDGGMNEKYEKIKMEWFE.

Met1 is modified (N-acetylmethionine).

The protein belongs to the VPS35 family. In terms of assembly, component of the retromer complex which consists of VPS29 (MAG1), VPS26 (VPS26A or VPS26B), VPS35 (VPS35A or VPS35B or VPS35C), VPS5/17 (SNX1 or SNX2A or SNX2B). Component of a retromer subcomplex consisting of VPS29 (MAG1), VPS26 (VPS26A or VPS26B), VPS35 (VPS35A or VPS35B or VPS35C).

The protein localises to the cytoplasm. It localises to the endosome membrane. It is found in the prevacuolar compartment membrane. Its subcellular location is the golgi apparatus. The protein resides in the trans-Golgi network membrane. Its function is as follows. Plays a role in vesicular protein sorting. Component of the membrane-associated retromer complex which is essential in endosome-to-Golgi retrograde transport. Also involved in the efficient sorting of seed storage proteins. The VPS29-VPS26-VPS35 subcomplex may be involved in recycling of specific cargos from endosome to the plasma membrane. This Arabidopsis thaliana (Mouse-ear cress) protein is Vacuolar protein sorting-associated protein 35C (VPS35C).